A 323-amino-acid polypeptide reads, in one-letter code: MKTTFLDFEQPIAELEGKIEELRFVQDDSAVDISEEIERLSKKSQQLTKDLYANLSPWQVSQIARHPQRPYTLDYVAELFTDFHELHGDRAFADDVSIVGGLARFGGHPCMVIGHQKGRDTKERAARNFGMPRPEGYRKAERLMRLAEKFGLPIFTFVDTPGAYPGIGAEERGQSEAIGRNLYVMAELKTPIITTVIGEGGSGGALAIAVADTVMMLQFSTYSVISPEGCASILWKSAAKAPEAAEALGLTAHRLKALGLIDKIINEPLGGAHRDPKGMAALLRRALADSLRQFQGMSIDALRERRFERLMAYGKFKETTPGA.

The CoA carboxyltransferase C-terminal domain occupies 39–293; that stretch reads RLSKKSQQLT…RRALADSLRQ (255 aa).

This sequence belongs to the AccA family. As to quaternary structure, acetyl-CoA carboxylase is a heterohexamer composed of biotin carboxyl carrier protein (AccB), biotin carboxylase (AccC) and two subunits each of ACCase subunit alpha (AccA) and ACCase subunit beta (AccD).

The protein resides in the cytoplasm. It catalyses the reaction N(6)-carboxybiotinyl-L-lysyl-[protein] + acetyl-CoA = N(6)-biotinyl-L-lysyl-[protein] + malonyl-CoA. It participates in lipid metabolism; malonyl-CoA biosynthesis; malonyl-CoA from acetyl-CoA: step 1/1. In terms of biological role, component of the acetyl coenzyme A carboxylase (ACC) complex. First, biotin carboxylase catalyzes the carboxylation of biotin on its carrier protein (BCCP) and then the CO(2) group is transferred by the carboxyltransferase to acetyl-CoA to form malonyl-CoA. The protein is Acetyl-coenzyme A carboxylase carboxyl transferase subunit alpha of Burkholderia lata (strain ATCC 17760 / DSM 23089 / LMG 22485 / NCIMB 9086 / R18194 / 383).